The chain runs to 178 residues: Acireductone dioxygenase (178 aa).

The disordered stretch occupies residues M1 to P22. Over residues K9–P22 the composition is skewed to basic and acidic residues. Positions 81, 83, 87, and 126 each coordinate Fe(2+). Positions 81, 83, 87, and 126 each coordinate Ni(2+).

Belongs to the acireductone dioxygenase (ARD) family. The cofactor is Fe(2+). Ni(2+) is required as a cofactor.

It localises to the cytoplasm. It is found in the nucleus. The catalysed reaction is 1,2-dihydroxy-5-(methylsulfanyl)pent-1-en-3-one + O2 = 4-methylsulfanyl-2-oxobutanoate + formate + 2 H(+). It catalyses the reaction 1,2-dihydroxy-5-(methylsulfanyl)pent-1-en-3-one + O2 = 3-(methylsulfanyl)propanoate + CO + formate + 2 H(+). It functions in the pathway amino-acid biosynthesis; L-methionine biosynthesis via salvage pathway; L-methionine from S-methyl-5-thio-alpha-D-ribose 1-phosphate: step 5/6. Its function is as follows. Catalyzes 2 different reactions between oxygen and the acireductone 1,2-dihydroxy-3-keto-5-methylthiopentene (DHK-MTPene) depending upon the metal bound in the active site. Fe-containing acireductone dioxygenase (Fe-ARD) produces formate and 2-keto-4-methylthiobutyrate (KMTB), the alpha-ketoacid precursor of methionine in the methionine recycle pathway. Ni-containing acireductone dioxygenase (Ni-ARD) produces methylthiopropionate, carbon monoxide and formate, and does not lie on the methionine recycle pathway. This is Acireductone dioxygenase (adi1) from Emericella nidulans (strain FGSC A4 / ATCC 38163 / CBS 112.46 / NRRL 194 / M139) (Aspergillus nidulans).